We begin with the raw amino-acid sequence, 184 residues long: Isopentenyl-diphosphate Delta-isomerase (184 aa).

Positions 25 and 32 each coordinate Mn(2+). A Nudix hydrolase domain is found at 30–164 (PLHLAFSCWL…PWAFSPWMVL (135 aa)). Residue Cys67 is part of the active site. Residue His69 coordinates Mn(2+). Glu87 contacts Mg(2+). Positions 114 and 116 each coordinate Mn(2+). Glu116 is an active-site residue.

This sequence belongs to the IPP isomerase type 1 family. In terms of assembly, homodimer. Mg(2+) serves as cofactor. The cofactor is Mn(2+).

It localises to the cytoplasm. It carries out the reaction isopentenyl diphosphate = dimethylallyl diphosphate. It participates in isoprenoid biosynthesis; dimethylallyl diphosphate biosynthesis; dimethylallyl diphosphate from isopentenyl diphosphate: step 1/1. Functionally, catalyzes the 1,3-allylic rearrangement of the homoallylic substrate isopentenyl (IPP) to its highly electrophilic allylic isomer, dimethylallyl diphosphate (DMAPP). In Klebsiella pneumoniae subsp. pneumoniae (strain ATCC 700721 / MGH 78578), this protein is Isopentenyl-diphosphate Delta-isomerase.